The primary structure comprises 60 residues: Large ribosomal subunit protein bL32 (60 aa).

Residues 1-16 (MAVPRRKTSPSRRGMR) show a composition bias toward basic residues. Residues 1 to 60 (MAVPRRKTSPSRRGMRRSADAIKKPTYAEDKDSGELRRPHHLDLKTGMYKGRQVLIKKES) are disordered. Positions 17–44 (RSADAIKKPTYAEDKDSGELRRPHHLDL) are enriched in basic and acidic residues.

The protein belongs to the bacterial ribosomal protein bL32 family.

This is Large ribosomal subunit protein bL32 from Rhodopseudomonas palustris (strain BisA53).